A 514-amino-acid polypeptide reads, in one-letter code: UDP-N-acetylmuramate--L-alanine ligase (514 aa).

Residue 127-133 participates in ATP binding; that stretch reads GTHGKTT. Positions 495–505 are enriched in low complexity; the sequence is IGGTIPDIPGG. The disordered stretch occupies residues 495–514; it reads IGGTIPDIPGGSTPDASAAG.

This sequence belongs to the MurCDEF family.

It is found in the cytoplasm. It carries out the reaction UDP-N-acetyl-alpha-D-muramate + L-alanine + ATP = UDP-N-acetyl-alpha-D-muramoyl-L-alanine + ADP + phosphate + H(+). It functions in the pathway cell wall biogenesis; peptidoglycan biosynthesis. In terms of biological role, cell wall formation. This is UDP-N-acetylmuramate--L-alanine ligase from Salinispora tropica (strain ATCC BAA-916 / DSM 44818 / JCM 13857 / NBRC 105044 / CNB-440).